We begin with the raw amino-acid sequence, 241 residues long: Attacin-C (241 aa).

Residues 1-21 (MSKIVLLIVVIVGVLGSLAVA) form the signal peptide. A propeptide spanning residues 22–23 (LP) is cleaved from the precursor. Glutamine 24 carries the post-translational modification Pyrrolidone carboxylic acid. Residue threonine 39 is glycosylated (O-linked (GalNAc...) threonine). Phosphoserine is present on serine 127.

The protein belongs to the attacin/sarcotoxin-2 family. Hemolymph (at protein level).

It localises to the secreted. Its function is as follows. Has antimicrobial activity in synergy with other peptides. Strongest activity observed against E.cloacae. The sequence is that of Attacin-C from Drosophila melanogaster (Fruit fly).